The chain runs to 734 residues: Ribosomal RNA large subunit methyltransferase K/L (734 aa).

In terms of domain architecture, THUMP spans 43 to 154 (VGYRSCLWSR…RNQLTLSLDL (112 aa)).

This sequence belongs to the methyltransferase superfamily. RlmKL family.

The protein localises to the cytoplasm. It carries out the reaction guanosine(2445) in 23S rRNA + S-adenosyl-L-methionine = N(2)-methylguanosine(2445) in 23S rRNA + S-adenosyl-L-homocysteine + H(+). It catalyses the reaction guanosine(2069) in 23S rRNA + S-adenosyl-L-methionine = N(2)-methylguanosine(2069) in 23S rRNA + S-adenosyl-L-homocysteine + H(+). In terms of biological role, specifically methylates the guanine in position 2445 (m2G2445) and the guanine in position 2069 (m7G2069) of 23S rRNA. This is Ribosomal RNA large subunit methyltransferase K/L from Hydrogenovibrio crunogenus (strain DSM 25203 / XCL-2) (Thiomicrospira crunogena).